We begin with the raw amino-acid sequence, 283 residues long: Protein/nucleic acid deglycase HchA (283 aa).

Zn(2+) is bound by residues His86, Glu91, and His123. The active-site Nucleophile is Cys185.

The protein belongs to the peptidase C56 family. HchA subfamily. As to quaternary structure, homodimer.

The protein resides in the cytoplasm. It catalyses the reaction N(omega)-(1-hydroxy-2-oxopropyl)-L-arginyl-[protein] + H2O = lactate + L-arginyl-[protein] + H(+). The catalysed reaction is N(6)-(1-hydroxy-2-oxopropyl)-L-lysyl-[protein] + H2O = lactate + L-lysyl-[protein] + H(+). It carries out the reaction S-(1-hydroxy-2-oxopropyl)-L-cysteinyl-[protein] + H2O = lactate + L-cysteinyl-[protein] + H(+). The enzyme catalyses N(omega)-(1-hydroxy-2-oxoethyl)-L-arginyl-[protein] + H2O = L-arginyl-[protein] + glycolate + H(+). It catalyses the reaction N(6)-(1-hydroxy-2-oxoethyl)-L-lysyl-[protein] + H2O = glycolate + L-lysyl-[protein] + H(+). The catalysed reaction is S-(1-hydroxy-2-oxoethyl)-L-cysteinyl-[protein] + H2O = glycolate + L-cysteinyl-[protein] + H(+). It carries out the reaction N(2)-(1-hydroxy-2-oxopropyl)-dGTP + H2O = lactate + dGTP + H(+). The enzyme catalyses N(2)-(1-hydroxy-2-oxopropyl)-GTP + H2O = lactate + GTP + H(+). It catalyses the reaction N(2)-(1-hydroxy-2-oxopropyl)-GDP + H2O = lactate + GDP + H(+). The catalysed reaction is N(2)-(1-hydroxy-2-oxopropyl)-GMP + H2O = lactate + GMP + H(+). It carries out the reaction N(2)-(1-hydroxy-2-oxoethyl)-dGTP + H2O = dGTP + glycolate + H(+). The enzyme catalyses N(2)-(1-hydroxy-2-oxoethyl)-GTP + H2O = glycolate + GTP + H(+). It catalyses the reaction N(2)-(1-hydroxy-2-oxoethyl)-GDP + H2O = glycolate + GDP + H(+). The catalysed reaction is N(2)-(1-hydroxy-2-oxoethyl)-GMP + H2O = glycolate + GMP + H(+). It carries out the reaction an N(2)-(1-hydroxy-2-oxopropyl)-guanosine in RNA + H2O = a guanosine in RNA + lactate + H(+). The enzyme catalyses an N(2)-(1-hydroxy-2-oxopropyl)-2'-deoxyguanosine in DNA + H2O = a 2'-deoxyguanosine in DNA + lactate + H(+). It catalyses the reaction an N(2)-(1-hydroxy-2-oxoethyl)-guanosine in RNA + H2O = a guanosine in RNA + glycolate + H(+). The catalysed reaction is an N(2)-(1-hydroxy-2-oxoethyl)-2'-deoxyguanosine in DNA + H2O = a 2'-deoxyguanosine in DNA + glycolate + H(+). Protein and nucleotide deglycase that catalyzes the deglycation of the Maillard adducts formed between amino groups of proteins or nucleotides and reactive carbonyl groups of glyoxals. Thus, functions as a protein deglycase that repairs methylglyoxal- and glyoxal-glycated proteins, and releases repaired proteins and lactate or glycolate, respectively. Deglycates cysteine, arginine and lysine residues in proteins, and thus reactivates these proteins by reversing glycation by glyoxals. Acts on early glycation intermediates (hemithioacetals and aminocarbinols), preventing the formation of Schiff bases and advanced glycation endproducts (AGE). Also functions as a nucleotide deglycase able to repair glycated guanine in the free nucleotide pool (GTP, GDP, GMP, dGTP) and in DNA and RNA. Is thus involved in a major nucleotide repair system named guanine glycation repair (GG repair), dedicated to reversing methylglyoxal and glyoxal damage via nucleotide sanitization and direct nucleic acid repair. Plays an important role in protecting cells from carbonyl stress. The sequence is that of Protein/nucleic acid deglycase HchA from Escherichia coli O139:H28 (strain E24377A / ETEC).